The sequence spans 454 residues: Keratin, type I cuticular Ha5 (454 aa).

Residues M1–E97 are head. The region spanning E97 to L407 is the IF rod domain. The coil 1A stretch occupies residues K98 to W125. The linker 1 stretch occupies residues S134 to D142. The tract at residues Y143–C243 is coil 1B. A linker 12 region spans residues Q244 to V259. Positions D260–E403 are coil 2. Positions D404 to F454 are tail.

Belongs to the intermediate filament family.

The chain is Keratin, type I cuticular Ha5 from Bos taurus (Bovine).